A 769-amino-acid chain; its full sequence is Phosphatidylinositol 4-phosphate 5-kinase 8 (769 aa).

MORN repeat units follow at residues 16-38 (YSGQ…DGII), 39-61 (YEGD…SGAK), 62-84 (YEGD…DGSV), 85-107 (YAGA…NSDV), 108-130 (YDGS…NGNR), 131-153 (FIGN…NGDL), 154-176 (FNGF…DGGF), and 177-198 (YFGT…AGSK). The interval 266–289 (PPRDFMHHGPSSKSARSVDSGQSE) is disordered. Residues 276 to 288 (SSKSARSVDSGQS) show a composition bias toward polar residues. The region spanning 344–765 (WNHYLMLNLQ…RFIDFLLKVF (422 aa)) is the PIPK domain. The tract at residues 725–746 (YNMKKKVEHTCKSMKYDPMTIS) is activation loop.

It catalyses the reaction a 1,2-diacyl-sn-glycero-3-phospho-(1D-myo-inositol 4-phosphate) + ATP = a 1,2-diacyl-sn-glycero-3-phospho-(1D-myo-inositol-4,5-bisphosphate) + ADP + H(+). This chain is Phosphatidylinositol 4-phosphate 5-kinase 8 (PIP5K8), found in Arabidopsis thaliana (Mouse-ear cress).